A 270-amino-acid polypeptide reads, in one-letter code: Urease accessory protein UreD (270 aa).

It belongs to the UreD family. In terms of assembly, ureD, UreF and UreG form a complex that acts as a GTP-hydrolysis-dependent molecular chaperone, activating the urease apoprotein by helping to assemble the nickel containing metallocenter of UreC. The UreE protein probably delivers the nickel.

It is found in the cytoplasm. Its function is as follows. Required for maturation of urease via the functional incorporation of the urease nickel metallocenter. The sequence is that of Urease accessory protein UreD from Actinobacillus pleuropneumoniae serotype 7 (strain AP76).